Here is a 648-residue protein sequence, read N- to C-terminus: MTNFEPKKFKNIWTIEDSISSYNIDKWGDKYFSINSKGNISVTKDIKSENKIDLFKLVKELKSREINPPLIIRFNDILKDRINALHDSFLKAIKTYKYKNIYQGVFPVKCNQQKNVLEKIIEFGSQWNFGLEVGSKSELLIGLALLENQNSLLICNGYKDKKYIEIATLARKLGKNPIIVIEQRDEVKRIIQAVQELKATPLIGIRAKLSSKSSGRWGKSIGDNSKFGLSIPEIMLTIKELKEANLINEMKLLHFHIGSQISDIAVIKDALQEASQIYVELCKLGAPMQYIDVGGGLGIDFDGTKTSSNTSTNYSLQNYANDVIATIKDSCELNNIKHPTIISESGRAIISHCSVLIFNVLGTSHVSSKLQIFDKKNQQLIISNLLDTFYELKKLKNKKINLSQIIELWNDAKKFKEDCLVAFRLGFLSLAERAYAEELTWACAKEISNNLNNDEINHPDLSEITETLASTYYANLSIFKSIPDSWAINQIFPIVPIHRHLEEPFCKGNFADLTCDSDGKLNNFIDNGKIKSLLNLHKPEEDKDYLIGIFMTGAYQEALGNLHNLFGSTNVVHIDINQDNSYKVRNIIKEDSKSEILQLLDYSSASLVESIRINTESAIDQKKLTIEEARKLMDQIEISLRKSSYLSE.

Lys-109 carries the post-translational modification N6-(pyridoxal phosphate)lysine. Substrate is bound at residue 291–301 (IDVGGGLGIDF).

The protein belongs to the Orn/Lys/Arg decarboxylase class-II family. SpeA subfamily. The cofactor is Mg(2+). Pyridoxal 5'-phosphate is required as a cofactor.

It carries out the reaction L-arginine + H(+) = agmatine + CO2. The protein operates within amine and polyamine biosynthesis; agmatine biosynthesis; agmatine from L-arginine: step 1/1. Its function is as follows. Catalyzes the biosynthesis of agmatine from arginine. This Prochlorococcus marinus (strain AS9601) protein is Biosynthetic arginine decarboxylase.